We begin with the raw amino-acid sequence, 248 residues long: Cell division protein ZapD (248 aa).

The protein belongs to the ZapD family. In terms of assembly, interacts with FtsZ.

Its subcellular location is the cytoplasm. Functionally, cell division factor that enhances FtsZ-ring assembly. Directly interacts with FtsZ and promotes bundling of FtsZ protofilaments, with a reduction in FtsZ GTPase activity. In Aliivibrio salmonicida (strain LFI1238) (Vibrio salmonicida (strain LFI1238)), this protein is Cell division protein ZapD.